A 291-amino-acid polypeptide reads, in one-letter code: tRNA dimethylallyltransferase (291 aa).

17–24 (GPTASGKS) provides a ligand contact to ATP. Residue 19-24 (TASGKS) participates in substrate binding.

Belongs to the IPP transferase family. Monomer. It depends on Mg(2+) as a cofactor.

The catalysed reaction is adenosine(37) in tRNA + dimethylallyl diphosphate = N(6)-dimethylallyladenosine(37) in tRNA + diphosphate. In terms of biological role, catalyzes the transfer of a dimethylallyl group onto the adenine at position 37 in tRNAs that read codons beginning with uridine, leading to the formation of N6-(dimethylallyl)adenosine (i(6)A). In Cereibacter sphaeroides (strain ATCC 17025 / ATH 2.4.3) (Rhodobacter sphaeroides), this protein is tRNA dimethylallyltransferase.